The sequence spans 140 residues: Large ribosomal subunit protein uL14 (140 aa).

The residue at position 17 (Ser-17) is a Phosphoserine. Tyr-38 carries the phosphotyrosine modification.

This sequence belongs to the universal ribosomal protein uL14 family. As to quaternary structure, component of the large ribosomal subunit.

The protein resides in the cytoplasm. In terms of biological role, component of the large ribosomal subunit. The ribosome is a large ribonucleoprotein complex responsible for the synthesis of proteins in the cell. The polypeptide is Large ribosomal subunit protein uL14 (RPL23) (Canis lupus familiaris (Dog)).